The following is a 137-amino-acid chain: Small ribosomal subunit protein bS6 (137 aa).

Residues 99-137 form a disordered region; it reads LSPMKAAESREDRRSGGDDRPRRSADSEERQSASQDEEE. Residues 105-129 are compositionally biased toward basic and acidic residues; that stretch reads AESREDRRSGGDDRPRRSADSEERQ.

It belongs to the bacterial ribosomal protein bS6 family.

Functionally, binds together with bS18 to 16S ribosomal RNA. The protein is Small ribosomal subunit protein bS6 of Marinobacter nauticus (strain ATCC 700491 / DSM 11845 / VT8) (Marinobacter aquaeolei).